The chain runs to 55 residues: MERVTLRIPEQQIDEVEQMVERGKFPNRSEAIRSAVREMIDEHTDKTGAKSWAKV.

It belongs to the CdrS family.

It is found in the cytoplasm. In terms of biological role, transcriptional regulator which plays a central role in the regulation of cell division. Activates the expression of the gene encoding the cell division protein FtsZ2, and of other genes encoding proteins predicted to function in critical aspects of cell division. Required for normal cell division but not for cell elongation. May act during the transition from stasis to growth. The CdrSL-FtsZ2 transcriptional network might coordinate cell division timing with cell growth. The polypeptide is Transcriptional regulator CdrS (Halobacterium salinarum (strain ATCC 700922 / JCM 11081 / NRC-1) (Halobacterium halobium)).